Reading from the N-terminus, the 276-residue chain is Protein SCO1 homolog 2, mitochondrial (276 aa).

Residues 1–14 (MLPCRRLVLSCKNQ) constitute a mitochondrion transit peptide. Residues 66-82 (YAVPAILLGFAGFVGFL) form a helical membrane-spanning segment. The 164-residue stretch at 110-273 (VKGPIIGGPF…SQELLKEVAS (164 aa)) folds into the Thioredoxin domain.

This sequence belongs to the SCO1/2 family. As to expression, expressed in the whole plant with highest expression in imbibed seeds and embryos, and the root hair zone.

Its subcellular location is the mitochondrion inner membrane. Functionally, thought to play a role in cellular copper homeostasis, mitochondrial redox signaling or insertion of copper into the active site of COX. Participates in copper and redox homeostasis. The chain is Protein SCO1 homolog 2, mitochondrial (HCC2) from Arabidopsis thaliana (Mouse-ear cress).